Consider the following 317-residue polypeptide: Malate dehydrogenase (317 aa).

NADP(+) is bound at residue 8–14; the sequence is GATGRVG. 2 residues coordinate substrate: R85 and R91. NADP(+) contacts are provided by residues N98 and 121 to 123; that span reads VTN. Substrate contacts are provided by N123 and R154. H178 (proton acceptor) is an active-site residue.

This sequence belongs to the LDH/MDH superfamily.

The enzyme catalyses (S)-malate + NADP(+) = oxaloacetate + NADPH + H(+). It carries out the reaction (S)-malate + NAD(+) = oxaloacetate + NADH + H(+). Catalyzes the reversible oxidation of malate to oxaloacetate. The protein is Malate dehydrogenase (mdh) of Methanopyrus kandleri (strain AV19 / DSM 6324 / JCM 9639 / NBRC 100938).